Here is a 2179-residue protein sequence, read N- to C-terminus: Genome polyprotein (2179 aa).

Residues 763 to 765 (RGD) carry the Cell attachment site motif. The region spanning 786-881 (LAYLDRGFYK…IFGSHSLSQH (96 aa)) is the LRAT domain. Catalysis depends on His796, which acts as the For protein 2A H-NC. The active-site For protein 2A H-NC; Acyl-thioester intermediate is the Cys865. An SF3 helicase domain is found at 1156–1317 (FQELARIPNR…KHYSKSGKLN (162 aa)). 1184 to 1191 (GEPGQGKS) serves as a coordination point for ATP. An O-(5'-phospho-RNA)-tyrosine modification is found at Tyr1493. Residues 1517 to 1707 (APYDGQLEHI…IPFNFLKNDM (191 aa)) enclose the Peptidase C3 domain. Residues His1557, Asp1595, and Cys1669 each act as for protease 3C activity in the active site. The Acyl-thioester intermediate role is filled by Cys1896. Residues 1944–2058 (DYNYEMDYSQ…SLDKEIEPER (115 aa)) form the RdRp catalytic domain. Mg(2+) is bound by residues Asp1950 and Asp2044.

It belongs to the picornaviruses polyprotein family. In terms of assembly, interacts with capsid protein VP1 and capsid protein VP3 to form heterotrimeric protomers. Five protomers subsequently associate to form pentamers which serve as building blocks for the capsid. As to quaternary structure, interacts with capsid protein VP0, and capsid protein VP3 to form heterotrimeric protomers. Five protomers subsequently associate to form pentamers which serve as building blocks for the capsid. Interacts with capsid protein VP0 and capsid protein VP1 to form heterotrimeric protomers. Five protomers subsequently associate to form pentamers which serve as building blocks for the capsid. In terms of assembly, homohexamer; forms a hexameric ring structure with 6-fold symmetry characteristic of AAA+ ATPases. As to quaternary structure, homodimer. Interacts with host ACBD3. Interacts with RNA-directed RNA polymerase. In terms of assembly, interacts with Viral protein genome-linked. Mg(2+) is required as a cofactor. Post-translationally, VPg is uridylylated by the polymerase and is covalently linked to the 5'-end of genomic RNA. This uridylylated form acts as a nucleotide-peptide primer for the polymerase. In terms of processing, specific enzymatic cleavages yield mature proteins. All cleavages are catalyzed by P3C.

The protein localises to the virion. It is found in the host cytoplasm. It localises to the host nucleus. The protein resides in the host nucleolus. Its subcellular location is the host cytoplasmic vesicle membrane. It carries out the reaction RNA(n) + a ribonucleoside 5'-triphosphate = RNA(n+1) + diphosphate. The catalysed reaction is a ribonucleoside 5'-triphosphate + H2O = a ribonucleoside 5'-diphosphate + phosphate + H(+). It catalyses the reaction Selective cleavage of Gln-|-Gly bond in the poliovirus polyprotein. In other picornavirus reactions Glu may be substituted for Gln, and Ser or Thr for Gly.. Forms an icosahedral capsid of pseudo T=3 symmetry together with capsid proteins VP1 and VP3. The capsid is 300 Angstroms in diameter, composed of 60 copies of each capsid protein and enclosing the viral positive strand RNA genome. Capsid proteins interact with host alpha-V/beta-3 integrin heterodimer to provide virion attachment target cell. This attachment induces virion internalization predominantly through clathrin-mediated endocytosis. Binds packaging signals present in the viral RNA. In terms of biological role, forms an icosahedral capsid of pseudo T=3 symmetry together with capsid proteins VP0 and VP1. The capsid is 300 Angstroms in diameter, composed of 60 copies of each capsid protein and enclosing the viral positive strand RNA genome. Capsid proteins interact with host alpha-V/beta-3 integrin heterodimer to provide virion attachment target cell. This attachment induces virion internalization predominantly through clathrin-mediated endocytosis. Binds packaging signals present in the viral RNA. Functionally, forms an icosahedral capsid of pseudo T=3 symmetry together with capsid proteins VP0 and VP3. The capsid is 300 Angstroms in diameter, composed of 60 copies of each capsid protein and enclosing the viral positive strand RNA genome. Capsid proteins interact with host alpha-V/beta-3 integrin heterodimer to provide virion attachment target cell. This attachment induces virion internalization predominantly through clathrin-mediated endocytosis. Binds packaging signals present in the viral RNA. Its function is as follows. Is not a protease. Plays an essential role in the virus replication cycle by acting as a viroporin. Creates a pore in the host endoplasmic reticulum and as a consequence releases Ca2+ in the cytoplasm of infected cell. In turn, high levels of cytoplasmic calcium may trigger membrane trafficking and transport of viral ER-associated proteins to viroplasms, sites of viral genome replication. In terms of biological role, induces and associates with structural rearrangements of intracellular membranes. Displays RNA-binding, nucleotide binding and NTPase activities. May play a role in virion morphogenesis and viral RNA encapsidation by interacting with the capsid protein VP3. Functionally, localizes the viral replication complex to the surface of membranous vesicles. It inhibits host cell endoplasmic reticulum-to-Golgi apparatus transport and causes the disassembly of the Golgi complex, possibly through GBF1 interaction. This would result in depletion of MHC, trail receptors and IFN receptors at the host cell surface. Plays an essential role in viral RNA replication by recruiting ACBD3 and PI4KB at the viral replication sites, thereby allowing the formation of the rearranged membranous structures where viral replication takes place. Its function is as follows. Acts as a primer for viral RNA replication and remains covalently bound to viral genomic RNA. VPg is uridylylated prior to priming replication into VPg-pUpU. The VPg-pUpU is then used as primer on the genomic RNA poly(A) by the RNA-dependent RNA polymerase to replicate the viral genome. Following genome release from the infecting virion in the cytoplasm, the VPg-RNA linkage is probably removed by host TDP2. During the late stage of the replication cycle, host TDP2 is excluded from sites of viral RNA synthesis and encapsidation, allowing for the generation of progeny virions. Cysteine protease that generates mature viral proteins from the precursor polyprotein. In addition to its proteolytic activity, it binds to viral RNA, and thus influences viral genome replication. RNA and substrate bind cooperatively to the protease. In terms of biological role, replicates the viral genomic RNA on the surface of intracellular membranes. Covalently attaches UMP to a tyrosine of VPg, which is used to prime RNA synthesis. The positive stranded RNA genome is first replicated at virus induced membranous vesicles, creating a dsRNA genomic replication form. This dsRNA is then used as template to synthesize positive stranded RNA genomes. ss(+)RNA genomes are either translated, replicated or encapsidated. In Human parechovirus 2 (strain Williamson) (HPeV-2), this protein is Genome polyprotein.